Here is a 515-residue protein sequence, read N- to C-terminus: Cytochrome P450 monooxygenase janP (515 aa).

Residues 20-36 form a helical membrane-spanning segment; it reads GFLWKYAAFMVFIYLLL. Cysteine 456 serves as a coordination point for heme. N-linked (GlcNAc...) asparagine glycosylation is present at asparagine 501.

Belongs to the cytochrome P450 family. Heme serves as cofactor.

The protein resides in the membrane. The protein operates within secondary metabolite biosynthesis. Its function is as follows. Cytochrome P450 monooxygenase; part of the gene cluster that mediates the biosynthesis of the indole diterpenes janthitremanes such as shearinine K or shearinine A. The geranylgeranyl diphosphate (GGPP) synthase janG catalyzes the first step in janthitremane biosynthesis via conversion of farnesyl pyrophosphate and isopentyl pyrophosphate into geranylgeranyl pyrophosphate (GGPP). Condensation of indole-3-glycerol phosphate with GGPP by the prenyl transferase janC then forms 3-geranylgeranylindole (3-GGI). Epoxidation by the FAD-dependent monooxygenase janM leads to a epoxidized-GGI that is substrate of the terpene cyclase janB for cyclization to yield paspaline. Paspaline is subsequently converted to 13-desoxypaspaline by the cytochrome P450 monooxygenase janP, via beta-PC-M6 in a series of alpha-face oxidations. The cytochrome P450 monooxygenase janQ is proposed to carry out sequential beta-face oxidation steps at C-7 and C-13 of 13-desoxypaspaline to form paspalicine and paspalinine respectively. The indole diterpene prenyltransferase janD may then convert paspalinine into shearinine K which is substrate of janO and/or additional enzymes for oxidation and cyclization to generate shearinine A. In Penicillium janthinellum (Penicillium vitale), this protein is Cytochrome P450 monooxygenase janP.